Here is a 508-residue protein sequence, read N- to C-terminus: Protein adenylyltransferase fic-1 (508 aa).

A helical transmembrane segment spans residues Thr44 to Val64. TPR repeat units follow at residues Ala147–Asn180 and Pro181–Asn214. The Inhibitory (S/T)XXXE(G/N) motif motif lies at Thr270–Gly275. Glu274 contacts ATP. Residues Ile326–Lys461 enclose the Fido domain. Thr352 bears the O-AMP-threonine; by autocatalysis mark. Residue Val357 to Phe360 participates in ATP binding. Residue His404 is part of the active site. ATP contacts are provided by residues Asp408–Arg415, Tyr440–Tyr441, and Asn448. Thr476 carries the post-translational modification O-AMP-threonine; by autocatalysis. Positions Leu482–Asn508 are disordered. The segment covering Val496–Asn508 has biased composition (basic and acidic residues).

The protein belongs to the fic family. In terms of assembly, forms homodimers; homodimerization might be required for adenylyltransferase activity. As to expression, ubiquitously expressed, with high expression in the germline.

Its subcellular location is the endoplasmic reticulum membrane. The protein localises to the nucleus membrane. It catalyses the reaction L-tyrosyl-[protein] + ATP = O-(5'-adenylyl)-L-tyrosyl-[protein] + diphosphate. It carries out the reaction L-threonyl-[protein] + ATP = 3-O-(5'-adenylyl)-L-threonyl-[protein] + diphosphate. The catalysed reaction is 3-O-(5'-adenylyl)-L-threonyl-[protein] + H2O = L-threonyl-[protein] + AMP + H(+). The side chain of Glu-274 determines which of the two opposing activities (AMPylase or de-AMPylase) will take place. In response to endoplasmic reticulum stress, mediates de-AMPylase activity. Adenylyltransferase activity is inhibited by the inhibitory helix present at the N-terminus: Glu-274 binds ATP and competes with ATP-binding at Arg-415, thereby preventing adenylyltransferase activity. In unstressed cells, disengagement of Glu-274 promotes adenylyltransferase activity. Activation dissociates ATP-binding from Glu-274, allowing ordered binding of the entire ATP moiety with the alpha-phosphate in an orientation that is productive for accepting an incoming target hydroxyl side chain. Its function is as follows. Protein that can both mediate the addition of adenosine 5'-monophosphate (AMP) to specific residues of target proteins (AMPylation), and the removal of the same modification from target proteins (de-AMPylation), depending on the context. The side chain of Glu-274 determines which of the two opposing activities (AMPylase or de-AMPylase) will take place. Adenylyltransferase that mediates the addition of adenosine 5'-monophosphate (AMP) to specific residues of target proteins. In vivo target proteins include the heat-shock 70 family proteins hsp-1 and hsp-3 and the translation elongation factors eef-1A, eef-1G and eef-2. Can AMPylate core histone H3 in vitro. Can also act as a phosphodiesterase by mediating removal of ATP (de-AMPylation) from target proteins. Decreases susceptibility to P.aeruginosa-mediated killing and might therefore play a role in the innate immune response. The protein is Protein adenylyltransferase fic-1 of Caenorhabditis elegans.